A 512-amino-acid chain; its full sequence is Glutathione-binding protein GsiB (512 aa).

Positions M1–A26 are cleaved as a signal peptide.

Belongs to the bacterial solute-binding protein 5 family. As to quaternary structure, the complex is composed of two ATP-binding proteins (GsiA), two transmembrane proteins (GsiC and GsiD) and a solute-binding protein (GsiB).

It is found in the periplasm. In terms of biological role, part of the ABC transporter complex GsiABCD involved in glutathione import. Binds glutathione. The sequence is that of Glutathione-binding protein GsiB from Shigella boydii serotype 4 (strain Sb227).